The chain runs to 90 residues: Large ribosomal subunit protein bL27 (90 aa).

Positions 1 to 20 are disordered; the sequence is MAHKKAGGSSRNGRDSAGKR.

Belongs to the bacterial ribosomal protein bL27 family.

The polypeptide is Large ribosomal subunit protein bL27 (Nitrobacter hamburgensis (strain DSM 10229 / NCIMB 13809 / X14)).